We begin with the raw amino-acid sequence, 498 residues long: GTPase Der (498 aa).

EngA-type G domains follow at residues 3–166 (PVVA…FEEL) and 212–385 (IKFA…RSAT). GTP is bound by residues 9 to 16 (GRPNVGKS), 56 to 60 (DTGGI), 118 to 121 (NKTD), 218 to 225 (GRPNVGKS), 265 to 269 (DTAGV), and 330 to 333 (NKWD). Residues 386-470 (KRISTSMLTR…PIHIEFQEGD (85 aa)) enclose the KH-like domain.

This sequence belongs to the TRAFAC class TrmE-Era-EngA-EngB-Septin-like GTPase superfamily. EngA (Der) GTPase family. In terms of assembly, associates with the 50S ribosomal subunit.

Functionally, GTPase that plays an essential role in the late steps of ribosome biogenesis. The sequence is that of GTPase Der from Tolumonas auensis (strain DSM 9187 / NBRC 110442 / TA 4).